Reading from the N-terminus, the 417-residue chain is Tyrosine--tRNA ligase (417 aa).

An L-tyrosine-binding site is contributed by tyrosine 34. The short motif at 39-48 (PTGDSMHIGH) is the 'HIGH' region element. 2 residues coordinate L-tyrosine: tyrosine 165 and glutamine 169. The 'KMSKS' region motif lies at 227–231 (KFGKS). ATP is bound at residue lysine 230. The 69-residue stretch at 349–417 (ENIVLWLVDT…KKKYFLARVK (69 aa)) folds into the S4 RNA-binding domain.

Belongs to the class-I aminoacyl-tRNA synthetase family. TyrS type 1 subfamily. As to quaternary structure, homodimer.

It localises to the cytoplasm. It catalyses the reaction tRNA(Tyr) + L-tyrosine + ATP = L-tyrosyl-tRNA(Tyr) + AMP + diphosphate + H(+). Its function is as follows. Catalyzes the attachment of tyrosine to tRNA(Tyr) in a two-step reaction: tyrosine is first activated by ATP to form Tyr-AMP and then transferred to the acceptor end of tRNA(Tyr). This chain is Tyrosine--tRNA ligase, found in Pediococcus pentosaceus (strain ATCC 25745 / CCUG 21536 / LMG 10740 / 183-1w).